Here is a 396-residue protein sequence, read N- to C-terminus: Protein ANTAGONIST OF LIKE HETEROCHROMATIN PROTEIN 1 (396 aa).

Composition is skewed to basic residues over residues 1–12 and 20–29; these read MAPVKQKKKNKK and KLAKNKEKKR. The disordered stretch occupies residues 1-29; that stretch reads MAPVKQKKKNKKKPLDKAKKLAKNKEKKR. A Nuclear localization signal motif is present at residues 6–13; sequence QKKKNKKK. One can recognise a DDE Tnp4 domain in the interval 183–348; sequence IDTTHIIMTL…IILVCCLLHN (166 aa).

This sequence belongs to the HARBI1 family. In terms of assembly, interacts with core components of POLYCOMB REPRESSIVE COMPLEX 2 (PRC2), a PcG protein complex with H3K27me3 histone methyltransferase activity. Associates with plant-specific PRC2 accessory components such as MSI1, EMF2, VRN2, FIE and CLF. The cofactor is a divalent metal cation. In terms of tissue distribution, expressed in roots, inflorescence stems, seedlings, leaves, flower buds, inflorescences, and siliques.

It is found in the nucleus. Its function is as follows. Transposase-derived protein that may have nuclease activity. Antagonist of polycomb-group (PcG) protein-mediated chromatin silencing, probably by preventing the association of POLYCOMB REPRESSIVE COMPLEX 2 (PRC2) with its accessory components. Needed for full reactivation of several floral homeotic genes that are repressed by PcG. The chain is Protein ANTAGONIST OF LIKE HETEROCHROMATIN PROTEIN 1 from Arabidopsis thaliana (Mouse-ear cress).